Here is a 753-residue protein sequence, read N- to C-terminus: Centromere protein I (753 aa).

Residues 1-15 (MQRRQSSKHSKRPLQ) show a composition bias toward basic residues. The disordered stretch occupies residues 1 to 54 (MQRRQSSKHSKRPLQVHHSNQTDLSAWRKGGTVDTEKSAQNRQSLSDQKNDNEQ).

It belongs to the CENP-I/CTF3 family. Component of the CENPA-HI complex, at least composed of CENPH, CENPI, CENPK, CENPL, CENPM, CENPO and CENPP.

The protein localises to the nucleus. It is found in the chromosome. It localises to the centromere. Its function is as follows. Component of the CENPA-HI complex, a centromeric complex involved in assembly of kinetochore proteins, mitotic progression and chromosome segregation. Required for the localization of CENPC but not CENPA to the centromere. It however may be involved in incorporation of newly synthesized CENPA into centromeres via its interaction with the CENPA-NAC complex. The protein is Centromere protein I (CENPI) of Gallus gallus (Chicken).